The sequence spans 780 residues: Vezatin (780 aa).

The next 2 membrane-spanning stretches (helical) occupy residues A140–F160 and T162–I182. Residues V430–A467 are a coiled coil. Disordered regions lie at residues D620–T718 and Q757–K780. Residues S624–A643 are compositionally biased toward polar residues. 2 stretches are compositionally biased toward basic and acidic residues: residues E647–Y663 and T690–A699. A compositionally biased stretch (low complexity) spans P702–A711. The segment covering F761 to K780 has biased composition (acidic residues).

The protein belongs to the vezatin family. As to quaternary structure, interacts with USH2A (via the cytoplasmic region); the interaction associates VEZT with the USH2 complex at the stereocilia base. Interacts with myosin MYO7A and the cadherin-catenins complex. Expressed in developing cochlear hair cells. Isoform 1, isoform 2 and isoform 3 are expressed in testis. In the seminiferous epithelium, present exclusively in the acrosome of spermatids (at protein level).

It localises to the cell membrane. Its subcellular location is the cell projection. It is found in the stereocilium membrane. The protein localises to the cell junction. The protein resides in the adherens junction. It localises to the nucleus. Its subcellular location is the cytoplasmic vesicle. It is found in the secretory vesicle. The protein localises to the acrosome. In terms of biological role, plays a pivotal role in the establishment of adherens junctions and their maintenance in adult life. Required for morphogenesis of the preimplantation embryo, and for the implantation process. The sequence is that of Vezatin from Mus musculus (Mouse).